The primary structure comprises 290 residues: 4-hydroxy-tetrahydrodipicolinate synthase (290 aa).

Threonine 45 is a binding site for pyruvate. The active-site Proton donor/acceptor is the tyrosine 133. The Schiff-base intermediate with substrate role is filled by lysine 161. A pyruvate-binding site is contributed by isoleucine 202.

This sequence belongs to the DapA family. Homotetramer; dimer of dimers.

Its subcellular location is the cytoplasm. It catalyses the reaction L-aspartate 4-semialdehyde + pyruvate = (2S,4S)-4-hydroxy-2,3,4,5-tetrahydrodipicolinate + H2O + H(+). Its pathway is amino-acid biosynthesis; L-lysine biosynthesis via DAP pathway; (S)-tetrahydrodipicolinate from L-aspartate: step 3/4. Functionally, catalyzes the condensation of (S)-aspartate-beta-semialdehyde [(S)-ASA] and pyruvate to 4-hydroxy-tetrahydrodipicolinate (HTPA). This Alkalilimnicola ehrlichii (strain ATCC BAA-1101 / DSM 17681 / MLHE-1) protein is 4-hydroxy-tetrahydrodipicolinate synthase.